A 530-amino-acid polypeptide reads, in one-letter code: Putative sulfate transporter YvdB (530 aa).

10 helical membrane-spanning segments follow: residues 19–39, 41–61, 68–88, 91–111, 121–141, 164–184, 192–212, 241–261, 313–333, and 384–404; these read LIAGIVVGVVAIPLGMAFAIA, GVEPEYGLYTVVIAGICISLF, IGGPTGAFVPILFGIIMQYGL, LLIAGFMAGVMLVLFGLFKLG, VIVGFTAGIAVLIFTEQIANF, LGTFNVYAILTAVIGLVILLV, VPGALLALLISTVVAVVFFPD, MVMLFPAALVIALLGGLESIL, AVSPVSGVVHGVVVLLVLLVF, and VLFDLIIGVATGLLLAFVFFI. The 111-residue stretch at 420–530 folds into the STAS domain; the sequence is PVLAKREDPS…FFDHHDEITG (111 aa).

Belongs to the SLC26A/SulP transporter (TC 2.A.53) family.

The protein localises to the cell membrane. This chain is Putative sulfate transporter YvdB (yvdB), found in Bacillus subtilis (strain 168).